The primary structure comprises 483 residues: NADH-quinone oxidoreductase subunit N (483 aa).

A run of 13 helical transmembrane segments spans residues 9–29 (LVLP…WGAF), 35–55 (PLFT…AVVG), 69–89 (AAAT…IVLG), 104–124 (AVLV…GDLI), 158–178 (FVLG…IYGF), 201–221 (VGLL…VSAA), 234–254 (APTS…MMMF), 272–292 (VLII…LAQT), 297–317 (LWAY…ATGG), 325–345 (LLFM…LQAL), 368–388 (IAVA…FSGF), 404–424 (VLLQ…AFYY), and 449–469 (AVGF…LIWL).

Belongs to the complex I subunit 2 family. As to quaternary structure, NDH-1 is composed of 14 different subunits. Subunits NuoA, H, J, K, L, M, N constitute the membrane sector of the complex.

It localises to the cell inner membrane. The enzyme catalyses a quinone + NADH + 5 H(+)(in) = a quinol + NAD(+) + 4 H(+)(out). Its function is as follows. NDH-1 shuttles electrons from NADH, via FMN and iron-sulfur (Fe-S) centers, to quinones in the respiratory chain. The immediate electron acceptor for the enzyme in this species is believed to be ubiquinone. Couples the redox reaction to proton translocation (for every two electrons transferred, four hydrogen ions are translocated across the cytoplasmic membrane), and thus conserves the redox energy in a proton gradient. In Caulobacter sp. (strain K31), this protein is NADH-quinone oxidoreductase subunit N.